Here is a 424-residue protein sequence, read N- to C-terminus: Histidinol dehydrogenase (424 aa).

3 residues coordinate NAD(+): Y127, Q188, and N211. Substrate contacts are provided by S234, Q256, and H259. Residues Q256 and H259 each contribute to the Zn(2+) site. Active-site proton acceptor residues include E322 and H323. Positions 323, 356, 410, and 415 each coordinate substrate. D356 is a Zn(2+) binding site. Residue H415 coordinates Zn(2+).

It belongs to the histidinol dehydrogenase family. It depends on Zn(2+) as a cofactor.

The catalysed reaction is L-histidinol + 2 NAD(+) + H2O = L-histidine + 2 NADH + 3 H(+). Its pathway is amino-acid biosynthesis; L-histidine biosynthesis; L-histidine from 5-phospho-alpha-D-ribose 1-diphosphate: step 9/9. Catalyzes the sequential NAD-dependent oxidations of L-histidinol to L-histidinaldehyde and then to L-histidine. This is Histidinol dehydrogenase from Methanococcus maripaludis (strain DSM 14266 / JCM 13030 / NBRC 101832 / S2 / LL).